The sequence spans 397 residues: 8-amino-7-oxononanoate synthase (397 aa).

Substrate is bound at residue Arg-24. 110 to 111 (GY) lines the pyridoxal 5'-phosphate pocket. His-135 provides a ligand contact to substrate. Ser-183, His-211, and Thr-240 together coordinate pyridoxal 5'-phosphate. Position 243 is an N6-(pyridoxal phosphate)lysine (Lys-243). Thr-357 contacts substrate.

The protein belongs to the class-II pyridoxal-phosphate-dependent aminotransferase family. BioF subfamily. Homodimer. Pyridoxal 5'-phosphate serves as cofactor.

The enzyme catalyses 6-carboxyhexanoyl-[ACP] + L-alanine + H(+) = (8S)-8-amino-7-oxononanoate + holo-[ACP] + CO2. Its pathway is cofactor biosynthesis; biotin biosynthesis. In terms of biological role, catalyzes the decarboxylative condensation of pimeloyl-[acyl-carrier protein] and L-alanine to produce 8-amino-7-oxononanoate (AON), [acyl-carrier protein], and carbon dioxide. In Hydrogenovibrio crunogenus (strain DSM 25203 / XCL-2) (Thiomicrospira crunogena), this protein is 8-amino-7-oxononanoate synthase.